We begin with the raw amino-acid sequence, 496 residues long: Palmitoleoyl-protein carboxylesterase NOTUM (496 aa).

A signal peptide spans Met1–Gly19. The disordered stretch occupies residues Glu21–Gly46. Ser81 bears the Phosphoserine; by FAM20C mark. Residue Asn96 is glycosylated (N-linked (GlcNAc...) asparagine). Residues Ser232, Asp340, and His389 each act as charge relay system in the active site.

Belongs to the pectinacetylesterase family. Notum subfamily. In terms of tissue distribution, rarely expressed in adult normal tissues.

The protein localises to the secreted. The catalysed reaction is [Wnt protein]-O-(9Z)-hexadecenoyl-L-serine + H2O = [Wnt protein]-L-serine + (9Z)-hexadecenoate + H(+). Carboxylesterase that acts as a key negative regulator of the Wnt signaling pathway by specifically mediating depalmitoleoylation of WNT proteins. Serine palmitoleoylation of WNT proteins is required for efficient binding to frizzled receptors. The polypeptide is Palmitoleoyl-protein carboxylesterase NOTUM (Homo sapiens (Human)).